Here is a 278-residue protein sequence, read N- to C-terminus: MVPLWFTLSALCFVGAAVLLYVDIDRRRGLGRRRKSWAKSHGFDYEYESEDLLKRWKRGVMSTVGDVTAKNVVLGQIRGEAVFIFDIEEVATVIALHRKVGTNVVVDLRLKGLKEPRENDIWLLGAIGPRMVYSTNLDAARRACDRRMVTFAHTAPDCAEIMWNEQNWTLVAMPVTSNRAQWDEGLRTVRQFNDLLRVLPPVPQNGSQAALPRRGGSPSRPLAPTPAGRRELPPGRADVPPARGDVSRFAPRPEAGRSDAFRRPPPARNGREASHFQR.

Met1 is a topological domain (periplasmic). A helical transmembrane segment spans residues 2-22 (VPLWFTLSALCFVGAAVLLYV). At 23-278 (DIDRRRGLGR…NGREASHFQR (256 aa)) the chain is on the cytoplasmic side. The disordered stretch occupies residues 200 to 278 (PPVPQNGSQA…NGREASHFQR (79 aa)). Residues 269 to 278 (NGREASHFQR) are compositionally biased toward basic and acidic residues.

In terms of assembly, monomer. Interacts (via N-terminus) with MmpL3; active trehalose monomycolate (TMM) biosynthesis is not required for the complex formation. Interacts with MSMEG_5308.

The protein resides in the cell inner membrane. Its subcellular location is the cell septum. It localises to the cell tip. In terms of biological role, required for MmpL3-dependent trehalose monomycolate (TMM) transport to the cell wall. Required for growth and cell elongation. This chain is Trehalose monomycolate transport factor A, found in Mycolicibacterium smegmatis (strain ATCC 700084 / mc(2)155) (Mycobacterium smegmatis).